The following is a 1385-amino-acid chain: Kinesin-like protein KIF15 (1385 aa).

Residues 1-24 (MAPGCKSELRNVTNSHSNQPSNED) form a disordered region. A compositionally biased stretch (polar residues) spans 10-21 (RNVTNSHSNQPS). Residues 26 to 363 (AIKVFVRIRP…LNFAQRAKLI (338 aa)) enclose the Kinesin motor domain. 109–116 (GQTGSGKT) serves as a coordination point for ATP. Residues 368–1385 (VVNEDTQGNV…NVFLKERKKE (1018 aa)) adopt a coiled-coil conformation. Residue Lys1007 is modified to N6-acetyllysine. 2 positions are modified to phosphoserine: Ser1139 and Ser1167. Residues 1222–1243 (DMKRQGESSSQSRPDSQQLKNE) are disordered. Positions 1228–1241 (ESSSQSRPDSQQLK) are enriched in polar residues.

It belongs to the TRAFAC class myosin-kinesin ATPase superfamily. Kinesin family. KLP2 subfamily. In terms of assembly, interacts with MKI67 and TPX2. Expressed in sympathetic neurons.

It is found in the cytoplasm. It localises to the cytoskeleton. The protein localises to the spindle. Its function is as follows. Plus-end directed kinesin-like motor enzyme involved in mitotic spindle assembly. The protein is Kinesin-like protein KIF15 (Kif15) of Rattus norvegicus (Rat).